A 280-amino-acid polypeptide reads, in one-letter code: 2-C-methyl-D-erythritol 4-phosphate cytidylyltransferase (280 aa).

This sequence belongs to the IspD/TarI cytidylyltransferase family. IspD subfamily.

The enzyme catalyses 2-C-methyl-D-erythritol 4-phosphate + CTP + H(+) = 4-CDP-2-C-methyl-D-erythritol + diphosphate. Its pathway is isoprenoid biosynthesis; isopentenyl diphosphate biosynthesis via DXP pathway; isopentenyl diphosphate from 1-deoxy-D-xylulose 5-phosphate: step 2/6. In terms of biological role, catalyzes the formation of 4-diphosphocytidyl-2-C-methyl-D-erythritol from CTP and 2-C-methyl-D-erythritol 4-phosphate (MEP). The sequence is that of 2-C-methyl-D-erythritol 4-phosphate cytidylyltransferase from Psychrobacter cryohalolentis (strain ATCC BAA-1226 / DSM 17306 / VKM B-2378 / K5).